Consider the following 548-residue polypeptide: MAAKDVKFGNDARVKMLRGVNVLADAVKVTLGPKGRNVVLDKSFGAPTITKDGVSVAREIELEDKFENMGAQMVKEVASKANDTAGDGTTTATVLAQAIITEGLKAVAAGMNPMDLKRGIDKAVTAAVEELKALSVPCSDSKAIAQVGTISANSDETVGKLIAEAMDKVGKEGVITVEDGTGLQDELDVVEGMQFDRGYLSPYFINKPETGAVELESPFILLADKKISNIREMLPVLEAVAKAGKPLLIIAEDVEGEALATLVVNTMRGIVKVAAVKAPGFGDRRKAMLQDIATLTGGTVISEEIGMELEKATLEDLGQAKRVVINKDTTTIIDGVGEEAAIQGRVAQIRQQIEEATSDYDREKLQERVAKLAGGVAVIKVGAATEVEMKEKKARVEDALHATRAAVEEGVVAGGGVALIRVASKLADLRGQNEEQNVGIKVALRAMEAPLRQIVLNCGEEPSVVANTVKAGDGNYGYNAATEEYGNMIDMGILDPTKVTRSALQYAASVAGLMITTECMVTDLPKNDAADLGAAGGMGGMGGMGGMM.

ATP-binding positions include 30-33, K51, 87-91, G415, 479-481, and D495; these read TLGP, DGTTT, and NAA.

It belongs to the chaperonin (HSP60) family. In terms of assembly, forms a cylinder of 14 subunits composed of two heptameric rings stacked back-to-back. Interacts with the co-chaperonin GroES.

The protein resides in the cytoplasm. The catalysed reaction is ATP + H2O + a folded polypeptide = ADP + phosphate + an unfolded polypeptide.. Its function is as follows. Together with its co-chaperonin GroES, plays an essential role in assisting protein folding. The GroEL-GroES system forms a nano-cage that allows encapsulation of the non-native substrate proteins and provides a physical environment optimized to promote and accelerate protein folding. In Escherichia fergusonii (strain ATCC 35469 / DSM 13698 / CCUG 18766 / IAM 14443 / JCM 21226 / LMG 7866 / NBRC 102419 / NCTC 12128 / CDC 0568-73), this protein is Chaperonin GroEL.